The primary structure comprises 97 residues: MTKKKRENLGVALEIDGLEKKLSQCRRDLEVVNSRLCGVELSSEARRSLEKEKSSLMNKASNYEKELKLLRQENRKNMLLSVAIFLLLTVIYAYWAL.

Positions glycine 10–leucine 79 form a coiled coil. A helical transmembrane segment spans residues asparagine 77–leucine 97.

It localises to the membrane. The polypeptide is Coiled-coil domain-containing protein 167 (CCDC167) (Bos taurus (Bovine)).